Here is a 238-residue protein sequence, read N- to C-terminus: Survival of motor neuron-related-splicing factor 30 (238 aa).

Residues 72-132 (SWKVGDKCMA…KPVEEGRKAK (61 aa)) form the Tudor domain. Positions 142–160 (KKEMIAQQREYKKKKALKK) match the Nuclear localization signal motif. Position 201 is a phosphoserine (Ser-201). At Lys-219 the chain carries N6-acetyllysine.

This sequence belongs to the SMN family. Associates with spliceosomes. Associates with U4/U5/U6 tri-snRNP and with U2 snRNP.

It localises to the nucleus speckle. It is found in the nucleus. The protein resides in the cajal body. In terms of biological role, involved in spliceosome assembly. The chain is Survival of motor neuron-related-splicing factor 30 (Smndc1) from Rattus norvegicus (Rat).